The sequence spans 234 residues: Purine nucleoside phosphorylase DeoD-type (234 aa).

Histidine 4 lines the a purine D-ribonucleoside pocket. Phosphate-binding positions include glycine 20, arginine 24, arginine 43, and arginine 87–serine 90. Residues glutamate 162, glutamate 179–glutamate 181, and serine 203–aspartate 204 contribute to the a purine D-ribonucleoside site. Aspartate 204 acts as the Proton donor in catalysis.

Belongs to the PNP/UDP phosphorylase family. Homohexamer; trimer of homodimers.

The catalysed reaction is a purine D-ribonucleoside + phosphate = a purine nucleobase + alpha-D-ribose 1-phosphate. The enzyme catalyses a purine 2'-deoxy-D-ribonucleoside + phosphate = a purine nucleobase + 2-deoxy-alpha-D-ribose 1-phosphate. Functionally, catalyzes the reversible phosphorolytic breakdown of the N-glycosidic bond in the beta-(deoxy)ribonucleoside molecules, with the formation of the corresponding free purine bases and pentose-1-phosphate. The chain is Purine nucleoside phosphorylase DeoD-type from Jannaschia sp. (strain CCS1).